The following is a 197-amino-acid chain: Probable GTP-binding protein EngB (197 aa).

An EngB-type G domain is found at 2–186 (KVKEVIFAGR…KRDLKQYLLS (185 aa)). GTP is bound by residues 10–17 (GRSNVGKS), 35–39 (GTTIR), 52–55 (DLPG), 132–135 (NKMD), and 166–168 (VCA). Residues serine 17 and threonine 37 each coordinate Mg(2+).

It belongs to the TRAFAC class TrmE-Era-EngA-EngB-Septin-like GTPase superfamily. EngB GTPase family. Requires Mg(2+) as cofactor.

Functionally, necessary for normal cell division and for the maintenance of normal septation. In Archaeoglobus fulgidus (strain ATCC 49558 / DSM 4304 / JCM 9628 / NBRC 100126 / VC-16), this protein is Probable GTP-binding protein EngB.